We begin with the raw amino-acid sequence, 137 residues long: uncharacterized protein (137 aa).

The next 5 helical transmembrane spans lie at 4 to 26, 35 to 57, 62 to 84, 89 to 111, and 116 to 135; these read AIILGLLVAVFYGVGTFFAKIVC, IVVNIVGIILCLIILLKYKNIII, ILTYAIISAVLVVIGSLLLYYAL, ASIVVPLSSIGPAITVALSILFL, and TLPQMIGIVLIIIGIILLSI. The EamA domain maps to 13–135; it reads VFYGVGTFFA…IIIGIILLSI (123 aa).

It localises to the cell membrane. This is an uncharacterized protein from Methanocaldococcus jannaschii (strain ATCC 43067 / DSM 2661 / JAL-1 / JCM 10045 / NBRC 100440) (Methanococcus jannaschii).